A 351-amino-acid polypeptide reads, in one-letter code: Thiamine-phosphate synthase (351 aa).

The tract at residues 1 to 129 (MVEPYSQQKQ…GQACKQMRYR (129 aa)) is unknown. The thiamine-phosphate synthase stretch occupies residues 130–351 (VYSLETNLMG…SQLNRIKPES (222 aa)). 4-amino-2-methyl-5-(diphosphooxymethyl)pyrimidine is bound by residues 177–181 (QYRDK) and asparagine 209. The Mg(2+) site is built by aspartate 210 and aspartate 229. Serine 248 contributes to the 4-amino-2-methyl-5-(diphosphooxymethyl)pyrimidine binding site. 274 to 276 (TPT) is a 2-[(2R,5Z)-2-carboxy-4-methylthiazol-5(2H)-ylidene]ethyl phosphate binding site. Lysine 277 contacts 4-amino-2-methyl-5-(diphosphooxymethyl)pyrimidine. Position 304 (glycine 304) interacts with 2-[(2R,5Z)-2-carboxy-4-methylthiazol-5(2H)-ylidene]ethyl phosphate.

Belongs to the thiamine-phosphate synthase family. Mg(2+) is required as a cofactor.

It carries out the reaction 2-[(2R,5Z)-2-carboxy-4-methylthiazol-5(2H)-ylidene]ethyl phosphate + 4-amino-2-methyl-5-(diphosphooxymethyl)pyrimidine + 2 H(+) = thiamine phosphate + CO2 + diphosphate. It catalyses the reaction 2-(2-carboxy-4-methylthiazol-5-yl)ethyl phosphate + 4-amino-2-methyl-5-(diphosphooxymethyl)pyrimidine + 2 H(+) = thiamine phosphate + CO2 + diphosphate. The enzyme catalyses 4-methyl-5-(2-phosphooxyethyl)-thiazole + 4-amino-2-methyl-5-(diphosphooxymethyl)pyrimidine + H(+) = thiamine phosphate + diphosphate. It participates in cofactor biosynthesis; thiamine diphosphate biosynthesis; thiamine phosphate from 4-amino-2-methyl-5-diphosphomethylpyrimidine and 4-methyl-5-(2-phosphoethyl)-thiazole: step 1/1. Condenses 4-methyl-5-(beta-hydroxyethyl)thiazole monophosphate (THZ-P) and 2-methyl-4-amino-5-hydroxymethyl pyrimidine pyrophosphate (HMP-PP) to form thiamine monophosphate (TMP). The chain is Thiamine-phosphate synthase from Nostoc sp. (strain PCC 7120 / SAG 25.82 / UTEX 2576).